A 262-amino-acid chain; its full sequence is Type III pantothenate kinase (262 aa).

ATP is bound at residue 9–16; the sequence is DIGNTNVK. Substrate is bound by residues Y103 and 110-113; that span reads GADR. The active-site Proton acceptor is D112. D134 serves as a coordination point for K(+). T137 lines the ATP pocket. T190 serves as a coordination point for substrate.

This sequence belongs to the type III pantothenate kinase family. As to quaternary structure, homodimer. It depends on NH4(+) as a cofactor. Requires K(+) as cofactor.

The protein localises to the cytoplasm. It carries out the reaction (R)-pantothenate + ATP = (R)-4'-phosphopantothenate + ADP + H(+). It participates in cofactor biosynthesis; coenzyme A biosynthesis; CoA from (R)-pantothenate: step 1/5. In terms of biological role, catalyzes the phosphorylation of pantothenate (Pan), the first step in CoA biosynthesis. This chain is Type III pantothenate kinase, found in Nitratidesulfovibrio vulgaris (strain ATCC 29579 / DSM 644 / CCUG 34227 / NCIMB 8303 / VKM B-1760 / Hildenborough) (Desulfovibrio vulgaris).